Consider the following 196-residue polypeptide: dITP/XTP pyrophosphatase (196 aa).

10 to 15 (TSNKGK) provides a ligand contact to substrate. Catalysis depends on aspartate 71, which acts as the Proton acceptor. Residue aspartate 71 coordinates Mg(2+). Substrate is bound by residues serine 72, 156 to 159 (FGYD), lysine 179, and 184 to 185 (HR).

Belongs to the HAM1 NTPase family. As to quaternary structure, homodimer. Requires Mg(2+) as cofactor.

It catalyses the reaction XTP + H2O = XMP + diphosphate + H(+). It carries out the reaction dITP + H2O = dIMP + diphosphate + H(+). The catalysed reaction is ITP + H2O = IMP + diphosphate + H(+). Its function is as follows. Pyrophosphatase that catalyzes the hydrolysis of nucleoside triphosphates to their monophosphate derivatives, with a high preference for the non-canonical purine nucleotides XTP (xanthosine triphosphate), dITP (deoxyinosine triphosphate) and ITP. Seems to function as a house-cleaning enzyme that removes non-canonical purine nucleotides from the nucleotide pool, thus preventing their incorporation into DNA/RNA and avoiding chromosomal lesions. This chain is dITP/XTP pyrophosphatase, found in Haemophilus ducreyi (strain 35000HP / ATCC 700724).